The chain runs to 178 residues: Peptide deformylase (178 aa).

C102 and H144 together coordinate Fe cation. Residue E145 is part of the active site. H148 contributes to the Fe cation binding site.

This sequence belongs to the polypeptide deformylase family. It depends on Fe(2+) as a cofactor.

It carries out the reaction N-terminal N-formyl-L-methionyl-[peptide] + H2O = N-terminal L-methionyl-[peptide] + formate. Functionally, removes the formyl group from the N-terminal Met of newly synthesized proteins. Requires at least a dipeptide for an efficient rate of reaction. N-terminal L-methionine is a prerequisite for activity but the enzyme has broad specificity at other positions. This Leptospira borgpetersenii serovar Hardjo-bovis (strain JB197) protein is Peptide deformylase.